The primary structure comprises 324 residues: UDP-galactose transporter homolog 1 (324 aa).

2 helical membrane-spanning segments follow: residues 7-27 (LVIA…AQEP) and 42-62 (HSSF…LCYL). An N-linked (GlcNAc...) asparagine glycan is attached at N97. Helical transmembrane passes span 106–126 (VGYM…HVLV), 135–155 (KALV…GGAE), 161–181 (ASLY…LTNA), 199–219 (HLMV…LVLF), 237–257 (ILTY…FVFF), 265–285 (LVLA…SIVV), and 290–310 (VRPV…WETV).

Belongs to the nucleotide-sugar transporter family. SLC35B subfamily.

The protein resides in the endoplasmic reticulum membrane. May be involved in specific transport of UDP-Gal from the cytosol to the Golgi lumen. Involved in the maintenance of optimal conditions for the folding of secretory pathway proteins in the endoplasmic reticulum. This chain is UDP-galactose transporter homolog 1 (HUT1), found in Eremothecium gossypii (strain ATCC 10895 / CBS 109.51 / FGSC 9923 / NRRL Y-1056) (Yeast).